We begin with the raw amino-acid sequence, 229 residues long: Ribosome maturation factor RimM (229 aa).

The PRC barrel domain maps to 148-229 (ADEFYWVDLI…RVVVDWEADY (82 aa)).

It belongs to the RimM family. Binds ribosomal protein uS19.

Its subcellular location is the cytoplasm. An accessory protein needed during the final step in the assembly of 30S ribosomal subunit, possibly for assembly of the head region. Essential for efficient processing of 16S rRNA. May be needed both before and after RbfA during the maturation of 16S rRNA. It has affinity for free ribosomal 30S subunits but not for 70S ribosomes. The protein is Ribosome maturation factor RimM of Burkholderia pseudomallei (strain 1710b).